We begin with the raw amino-acid sequence, 513 residues long: MGPTKYIIIAVVIIIICVILGLYVVDKKAKEKLSEASKEARRLKEEAERDAEAKKKEAILEAKEEAHKLRAEVERENRERRNEVQRLERRIIQKEEALDKKSEALENKEEALNKKQQKIEDVETHMEELHEKQRTELERISGLTTEQAKEFLLEQVRKEVKHETAVMIKEIETKAKEEADKRAREVITYAIQRCAADHVAETTVHVVNLPNDEMKGRIIGREGRNIRTLETLTGVDLIIDDTPEAVILSGFDPIRREVARIALEKLIVDGRIHPARIEEMVEKAKKEVEISIKEEGEQATFETGIHGLHIELIRLLGRLKYRTSYGQNVLKHSIEVSHLAGLMASELGIDPTLAKRVGLLHDIGKAVDHEVEGPHAIIGSEIAKKYRESALVVNAIGAHHGDMEPQSLEAILVQAADAISAARPGARRETLEAYIKRLEKLEEIANECEGVEKSYAIQAGREIRIMVKPEVLDDTGCIEMARNIVKQIESELEYPGQIKVNVIRETRAIEYAK.

Residues 6–26 (YIIIAVVIIIICVILGLYVVD) traverse the membrane as a helical segment. The KH domain maps to 203–288 (TVHVVNLPND…EMVEKAKKEV (86 aa)). The HD domain occupies 329–422 (VLKHSIEVSH…VQAADAISAA (94 aa)).

It belongs to the RNase Y family.

The protein localises to the cell membrane. Its function is as follows. Endoribonuclease that initiates mRNA decay. The protein is Ribonuclease Y of Clostridium botulinum (strain Loch Maree / Type A3).